A 635-amino-acid polypeptide reads, in one-letter code: Cationic amino acid transporter 2, vacuolar (635 aa).

At 1–48 (MGFLVDTQKEGGGHSWGYVRSLVRRKQVDSANGQSHGHQLARALTVPH) the chain is on the cytoplasmic side. The chain crosses the membrane as a helical span at residues 49–69 (LVAIGVGATIGAGVYILVGTV). Topologically, residues 70–76 (AREHSGP) are vacuolar. The chain crosses the membrane as a helical span at residues 77–97 (SLALSFLIAGIAAGLSAFCYA). Residues 98–108 (ELSSRCPSAGS) lie on the Cytoplasmic side of the membrane. A helical transmembrane segment spans residues 109-131 (AYHYSYICVGEGVAWIIGWALIL). Topologically, residues 132-171 (EYTIGGSAVARGISPNLALIFGGEDGLPAILARHQIPGLD) are vacuolar. A helical membrane pass occupies residues 172–192 (IVVDPCAAILVFVVTGLLCMG). Topologically, residues 193 to 200 (IKESTFAQ) are cytoplasmic. Residues 201–221 (GIVTAVNVCVLLFVIVAGSYL) traverse the membrane as a helical segment. The Vacuolar portion of the chain corresponds to 222-235 (GFKTGWPGYELPTG). A helical transmembrane segment spans residues 236–256 (FFPFGVDGMFAGSATVFFAFI). At 257-280 (GFDSVASTAEEVRNPQRDLPIGIG) the chain is on the cytoplasmic side. Residues 281–301 (LALLLCCSLYMMVSIVIVGLI) form a helical membrane-spanning segment. Residues 302 to 324 (PYYAMDPDTPISSAFASHDMQWA) lie on the Vacuolar side of the membrane. A helical transmembrane segment spans residues 325-345 (VYLITLGAVMALCSALMGALL). Over 346-376 (PQPRILMAMARDGLLPSIFSDINKRTQVPVK) the chain is Cytoplasmic. Residues 377 to 397 (ATVATGLCAATLAFFMDVSQL) traverse the membrane as a helical segment. Residue Ala-398 is a topological domain, vacuolar. The helical transmembrane segment at 399–419 (GMVSVGTLLAFTMVAISVLIL) threads the bilayer. Residues 420 to 493 (RYVPPDEQPL…CLVLSEETRR (74 aa)) lie on the Cytoplasmic side of the membrane. Residues 494–514 (IVAGWSIMFTCVGAFLLSYAA) form a helical membrane-spanning segment. Residues 515 to 524 (SSLSFPGLIR) lie on the Vacuolar side of the membrane. A helical membrane pass occupies residues 525 to 545 (YPLCGVGGCLLLAGLIALSSI). The Cytoplasmic segment spans residues 546-560 (DQDDARHTFGHSGGY). Residues 561–581 (MCPFVPLLPIICILINMYLLV) form a helical membrane-spanning segment. At 582-585 (NLGS) the chain is on the vacuolar side. The helical transmembrane segment at 586–606 (ATWARVSVWLLIGVIVYVFYG) threads the bilayer. Topologically, residues 607-635 (RKNSSLANAVYVTTAHAEEIYREHEGSLA) are cytoplasmic.

This sequence belongs to the amino acid-polyamine-organocation (APC) superfamily. Cationic amino acid transporter (CAT) (TC 2.A.3.3) family. Expressed in roots, stems, flowers, leaves, and siliques.

Its subcellular location is the vacuole membrane. Permease involved in the transport of the cationic amino acids. This is Cationic amino acid transporter 2, vacuolar (CAT2) from Arabidopsis thaliana (Mouse-ear cress).